Reading from the N-terminus, the 368-residue chain is Glutamate 5-kinase (368 aa).

Lys13 contacts ATP. 3 residues coordinate substrate: Ser54, Asp141, and Asn153. An ATP-binding site is contributed by 173–174 (SD). The region spanning 278-355 (KGSLRLDAGA…DEIPEILGYP (78 aa)) is the PUA domain.

This sequence belongs to the glutamate 5-kinase family.

It localises to the cytoplasm. It catalyses the reaction L-glutamate + ATP = L-glutamyl 5-phosphate + ADP. It participates in amino-acid biosynthesis; L-proline biosynthesis; L-glutamate 5-semialdehyde from L-glutamate: step 1/2. Its function is as follows. Catalyzes the transfer of a phosphate group to glutamate to form L-glutamate 5-phosphate. The sequence is that of Glutamate 5-kinase from Jannaschia sp. (strain CCS1).